A 303-amino-acid chain; its full sequence is MRILFLGTPDFASVHLEFLMKNGFDVVAVISQPDKPKGRGKKILPTPVKEVALKYNIPVFQPKKLNKEGLKIIENLKPDIGIVVAYGKLLKPPFLNTLEFYNVHASLLPSYRGAAPIQRVLENGEKRTGITIFKIGEGMDDGPIALKKEVEVGEFETFGELYEKLLDLGKKALIEFLNNYPIELIPQEGKVSFAPKITKEDLKLDFSKDVTFVKNKIRAYDPLPGVRVLFKRKIVKLFGVFSVLENSSREIGKIISIDKEGALISCENGSVKVRYIQFPGKRKMTFFEAKNGCLIKEGECFDC.

106–109 (SLLP) serves as a coordination point for (6S)-5,6,7,8-tetrahydrofolate.

Belongs to the Fmt family.

The catalysed reaction is L-methionyl-tRNA(fMet) + (6R)-10-formyltetrahydrofolate = N-formyl-L-methionyl-tRNA(fMet) + (6S)-5,6,7,8-tetrahydrofolate + H(+). Functionally, attaches a formyl group to the free amino group of methionyl-tRNA(fMet). The formyl group appears to play a dual role in the initiator identity of N-formylmethionyl-tRNA by promoting its recognition by IF2 and preventing the misappropriation of this tRNA by the elongation apparatus. The polypeptide is Methionyl-tRNA formyltransferase (Thermosipho melanesiensis (strain DSM 12029 / CIP 104789 / BI429)).